The sequence spans 21 residues: 23S rRNA methylase leader peptide (21 aa).

Functionally, involved in erythromycin resistance. The protein is 23S rRNA methylase leader peptide of Corynebacterium diphtheriae.